Consider the following 401-residue polypeptide: Zinc finger CCHC domain-containing protein 12 (401 aa).

Disordered regions lie at residues M1 to P20 and D270 to P292. Over residues D270 to D282 the composition is skewed to acidic residues. The CCHC-type zinc finger occupies V345–N362.

The protein belongs to the ZCCHC12 family. Interacts with SMAD1 and CREB-binding protein (CBP). Forms a protein-DNA complex through its association with SMAD1.

Transcriptional coactivator in the bone morphogenetic protein (BMP)-signaling pathway. It positively modulates BMP signaling by interacting with SMAD1 and associating with CBP in the transcription complex. It contributes to the BMP-induced enhancement of cholinergic-neuron-specific gene expression. The protein is Zinc finger CCHC domain-containing protein 12 (Zcchc12) of Rattus norvegicus (Rat).